A 592-amino-acid chain; its full sequence is Threonine--tRNA ligase (592 aa).

The tract at residues 193-488 is catalytic; that stretch reads DHRKLGPALG…LIEHYGGAFP (296 aa). The Zn(2+) site is built by C284, H335, and H465.

This sequence belongs to the class-II aminoacyl-tRNA synthetase family. In terms of assembly, homodimer. It depends on Zn(2+) as a cofactor.

Its subcellular location is the cytoplasm. It catalyses the reaction tRNA(Thr) + L-threonine + ATP = L-threonyl-tRNA(Thr) + AMP + diphosphate + H(+). Its function is as follows. Catalyzes the attachment of threonine to tRNA(Thr) in a two-step reaction: L-threonine is first activated by ATP to form Thr-AMP and then transferred to the acceptor end of tRNA(Thr). Also edits incorrectly charged L-seryl-tRNA(Thr). The polypeptide is Threonine--tRNA ligase (Treponema pallidum (strain Nichols)).